A 256-amino-acid polypeptide reads, in one-letter code: GTP cyclohydrolase FolE2 (256 aa).

This sequence belongs to the GTP cyclohydrolase IV family.

The catalysed reaction is GTP + H2O = 7,8-dihydroneopterin 3'-triphosphate + formate + H(+). The protein operates within cofactor biosynthesis; 7,8-dihydroneopterin triphosphate biosynthesis; 7,8-dihydroneopterin triphosphate from GTP: step 1/1. Its function is as follows. Converts GTP to 7,8-dihydroneopterin triphosphate. This is GTP cyclohydrolase FolE2 from Caldicellulosiruptor saccharolyticus (strain ATCC 43494 / DSM 8903 / Tp8T 6331).